The sequence spans 718 residues: Methionine--tRNA ligase (718 aa).

The 'HIGH' region motif lies at 12-22 (PYANGDIHLGH). Zn(2+)-binding residues include Cys143, Cys146, Cys156, and Cys159. The 'KMSKS' region signature appears at 349-353 (KMSKS). Position 352 (Lys352) interacts with ATP. Residues 573-599 (AAPAAKVASSQQRHAEKQQHEAQSAET) are disordered. In terms of domain architecture, tRNA-binding spans 608 to 718 (DFTKVDLRIA…TGAASGMRVK (111 aa)).

The protein belongs to the class-I aminoacyl-tRNA synthetase family. MetG type 1 subfamily. As to quaternary structure, homodimer. Requires Zn(2+) as cofactor.

The protein localises to the cytoplasm. The catalysed reaction is tRNA(Met) + L-methionine + ATP = L-methionyl-tRNA(Met) + AMP + diphosphate. In terms of biological role, is required not only for elongation of protein synthesis but also for the initiation of all mRNA translation through initiator tRNA(fMet) aminoacylation. The polypeptide is Methionine--tRNA ligase (Aromatoleum aromaticum (strain DSM 19018 / LMG 30748 / EbN1) (Azoarcus sp. (strain EbN1))).